The following is a 300-amino-acid chain: N-acetylmannosamine kinase (300 aa).

Residues alanine 5–lysine 12 and glycine 132–leucine 139 each bind ATP. Positions 156, 166, 168, and 173 each coordinate Zn(2+).

Belongs to the ROK (NagC/XylR) family. NanK subfamily. Homodimer.

It carries out the reaction an N-acyl-D-mannosamine + ATP = an N-acyl-D-mannosamine 6-phosphate + ADP + H(+). It functions in the pathway amino-sugar metabolism; N-acetylneuraminate degradation; D-fructose 6-phosphate from N-acetylneuraminate: step 2/5. Its function is as follows. Catalyzes the phosphorylation of N-acetylmannosamine (ManNAc) to ManNAc-6-P. This chain is N-acetylmannosamine kinase, found in Haemophilus influenzae (strain PittEE).